Consider the following 239-residue polypeptide: tRNA (guanine-N(7)-)-methyltransferase (239 aa).

Glu-69, Glu-94, Asp-121, and Asp-144 together coordinate S-adenosyl-L-methionine. Asp-144 is a catalytic residue. Lys-148 contributes to the substrate binding site. The interaction with RNA stretch occupies residues 150-155; the sequence is RHNKRR. Residues Asp-180 and 217-220 contribute to the substrate site; that span reads TKFE.

This sequence belongs to the class I-like SAM-binding methyltransferase superfamily. TrmB family. Monomer.

The catalysed reaction is guanosine(46) in tRNA + S-adenosyl-L-methionine = N(7)-methylguanosine(46) in tRNA + S-adenosyl-L-homocysteine. The protein operates within tRNA modification; N(7)-methylguanine-tRNA biosynthesis. Catalyzes the formation of N(7)-methylguanine at position 46 (m7G46) in tRNA. The sequence is that of tRNA (guanine-N(7)-)-methyltransferase from Shigella boydii serotype 4 (strain Sb227).